Consider the following 259-residue polypeptide: Ribonuclease PH (259 aa).

Residues arginine 88 and 126–128 each bind phosphate; that span reads GTR.

The protein belongs to the RNase PH family. Homohexameric ring arranged as a trimer of dimers.

The catalysed reaction is tRNA(n+1) + phosphate = tRNA(n) + a ribonucleoside 5'-diphosphate. Its function is as follows. Phosphorolytic 3'-5' exoribonuclease that plays an important role in tRNA 3'-end maturation. Removes nucleotide residues following the 3'-CCA terminus of tRNAs; can also add nucleotides to the ends of RNA molecules by using nucleoside diphosphates as substrates, but this may not be physiologically important. Probably plays a role in initiation of 16S rRNA degradation (leading to ribosome degradation) during starvation. The protein is Ribonuclease PH of Mycobacterium bovis (strain ATCC BAA-935 / AF2122/97).